We begin with the raw amino-acid sequence, 215 residues long: UPF0502 protein YceH (215 aa).

This sequence belongs to the UPF0502 family.

The chain is UPF0502 protein YceH from Salmonella paratyphi B (strain ATCC BAA-1250 / SPB7).